Consider the following 337-residue polypeptide: tRNA N6-adenosine threonylcarbamoyltransferase (337 aa).

Fe cation contacts are provided by histidine 111 and histidine 115. Substrate contacts are provided by residues 134-138 (LVSGG), aspartate 167, glycine 180, and asparagine 272. A Fe cation-binding site is contributed by aspartate 300.

Belongs to the KAE1 / TsaD family. Fe(2+) serves as cofactor.

The protein resides in the cytoplasm. The catalysed reaction is L-threonylcarbamoyladenylate + adenosine(37) in tRNA = N(6)-L-threonylcarbamoyladenosine(37) in tRNA + AMP + H(+). Required for the formation of a threonylcarbamoyl group on adenosine at position 37 (t(6)A37) in tRNAs that read codons beginning with adenine. Is involved in the transfer of the threonylcarbamoyl moiety of threonylcarbamoyl-AMP (TC-AMP) to the N6 group of A37, together with TsaE and TsaB. TsaD likely plays a direct catalytic role in this reaction. This is tRNA N6-adenosine threonylcarbamoyltransferase from Shewanella woodyi (strain ATCC 51908 / MS32).